A 277-amino-acid polypeptide reads, in one-letter code: MTKADAVAKQAQDYYDSGSADGFYYRIWGGEDLHIGIYNTPDEPIYDASVRTVSRICDKIKNWPAGTKVLDLGAGYGGSARYMAKHHGFDVDCLNISLVQNERNRQMNQEQGLADKIRVFDGSFEELPFENKSYDVLWSQDSILHSGNRRKVMEEADRVLKSGGDFVFTDPMQTDNCPEGVLEPVLARIHLDSLGSVGFYRQVAEELGWEFVEFDEQTHQLVNHYSRVLQELEAHYDQLQPECSQEYLDRMKVGLNHWINAGKSGYMAWGILKFHKP.

It belongs to the methyltransferase superfamily. As to quaternary structure, monomer.

The enzyme catalyses sarcosine + 2 S-adenosyl-L-methionine = glycine betaine + 2 S-adenosyl-L-homocysteine + 2 H(+). The catalysed reaction is sarcosine + S-adenosyl-L-methionine = N,N-dimethylglycine + S-adenosyl-L-homocysteine + H(+). It catalyses the reaction N,N-dimethylglycine + S-adenosyl-L-methionine = glycine betaine + S-adenosyl-L-homocysteine + H(+). It functions in the pathway amine and polyamine biosynthesis; betaine biosynthesis via glycine pathway; betaine from glycine: step 2/3. Its pathway is amine and polyamine biosynthesis; betaine biosynthesis via glycine pathway; betaine from glycine: step 3/3. With respect to regulation, inhibited by n-butylic acid and S-adenosyl-L-homocysteine. Functionally, catalyzes the methylation of sarcosine and dimethylglycine to dimethylglycine and betaine, respectively, with S-adenosylmethionine (AdoMet) acting as the methyl donor. Activity with sarcosine is much weaker than activity with dimethylglycine. This Aphanothece halophytica protein is Sarcosine/dimethylglycine N-methyltransferase.